A 777-amino-acid polypeptide reads, in one-letter code: Phosphate transporter PHO1 homolog 10 (777 aa).

Residues 1–322 enclose the SPX domain; that stretch reads MKFGKIFKKQ…SRNASRNYMK (322 aa). The Cytoplasmic segment spans residues 1 to 372; that stretch reads MKFGKIFKKQ…RPKVKRERHR (372 aa). A helical membrane pass occupies residues 373-393; the sequence is VTFFSGFFSGCSIALVIAVVF. The Extracellular segment spans residues 394-408; it reads KIESRKIMEKNYGTE. A helical membrane pass occupies residues 409 to 429; it reads YMANIIPLYSLFGFIILHMLM. At 430-459 the chain is on the cytoplasmic side; that stretch reads YSANIYFWKRYRVNYTFIFGFKQGTELGDR. Residues 460–480 traverse the membrane as a helical segment; it reads EVFLVSTGLAVLAFVCFLLNL. The Extracellular segment spans residues 481 to 496; the sequence is QLDMDWRMKHHKTLPE. Residues 497–517 form a helical membrane-spanning segment; sequence VIPLCLATIVLFILFCPFNII. Residues 518-646 are Cytoplasmic-facing; sequence YRSSRFFFIR…YELKKGRTWM (129 aa). The region spanning 581-775 is the EXS domain; the sequence is HSHGVYNAFY…HYYDDDDVDK (195 aa). Residues 647-667 form a helical membrane-spanning segment; that stretch reads ILALVSSGVATGMNTFWDIVI. Residues 668 to 691 are Extracellular-facing; it reads DWGLLRKHSKNPYLRDKLLVPHKS. A helical membrane pass occupies residues 692–712; the sequence is VYFAAMVVNVILRVAWMQLVL. Over 713-777 the chain is Cytoplasmic; the sequence is EFNLKSLHKI…YDDDDVDKDD (65 aa).

The protein belongs to the SYG1 (TC 2.A.94) family. In terms of tissue distribution, expressed in root epidermis and cortex, leaf blades and hydathodes, stems and flowers.

The protein resides in the cell membrane. In terms of biological role, may transport inorganic phosphate (Pi). The chain is Phosphate transporter PHO1 homolog 10 (PHO1-H10) from Arabidopsis thaliana (Mouse-ear cress).